The following is a 446-amino-acid chain: Adenylosuccinate synthetase (446 aa).

Residues 12 to 18 (GDEGKGK) and 40 to 42 (GHT) contribute to the GTP site. The active-site Proton acceptor is the D13. 2 residues coordinate Mg(2+): D13 and G40. IMP contacts are provided by residues 13 to 16 (DEGK), 38 to 41 (NAGH), T128, R142, Q223, T238, and R302. H41 acts as the Proton donor in catalysis. 298–304 (TTTGRRR) lines the substrate pocket. Residues R304, 330–332 (KLD), and 412–414 (SLG) contribute to the GTP site.

It belongs to the adenylosuccinate synthetase family. In terms of assembly, homodimer. It depends on Mg(2+) as a cofactor.

It localises to the cytoplasm. The enzyme catalyses IMP + L-aspartate + GTP = N(6)-(1,2-dicarboxyethyl)-AMP + GDP + phosphate + 2 H(+). It functions in the pathway purine metabolism; AMP biosynthesis via de novo pathway; AMP from IMP: step 1/2. Its function is as follows. Plays an important role in the de novo pathway of purine nucleotide biosynthesis. Catalyzes the first committed step in the biosynthesis of AMP from IMP. The protein is Adenylosuccinate synthetase of Crocosphaera subtropica (strain ATCC 51142 / BH68) (Cyanothece sp. (strain ATCC 51142)).